Reading from the N-terminus, the 194-residue chain is dTTP/UTP pyrophosphatase (194 aa).

Asp76 acts as the Proton acceptor in catalysis.

It belongs to the Maf family. YhdE subfamily. A divalent metal cation serves as cofactor.

The protein localises to the cytoplasm. The catalysed reaction is dTTP + H2O = dTMP + diphosphate + H(+). The enzyme catalyses UTP + H2O = UMP + diphosphate + H(+). In terms of biological role, nucleoside triphosphate pyrophosphatase that hydrolyzes dTTP and UTP. May have a dual role in cell division arrest and in preventing the incorporation of modified nucleotides into cellular nucleic acids. In Shewanella sp. (strain MR-7), this protein is dTTP/UTP pyrophosphatase.